A 333-amino-acid chain; its full sequence is DNA-directed RNA polymerase subunit alpha (333 aa).

Residues 1–246 (MEKFIKINWT…AHLNIIGDVN (246 aa)) form an alpha N-terminal domain (alpha-NTD) region. The interval 263–333 (HSKTQNILIQ…YNVFLDKGEE (71 aa)) is alpha C-terminal domain (alpha-CTD).

Belongs to the RNA polymerase alpha chain family. In terms of assembly, homodimer. The RNAP catalytic core consists of 2 alpha, 1 beta, 1 beta' and 1 omega subunit. When a sigma factor is associated with the core the holoenzyme is formed, which can initiate transcription.

It catalyses the reaction RNA(n) + a ribonucleoside 5'-triphosphate = RNA(n+1) + diphosphate. In terms of biological role, DNA-dependent RNA polymerase catalyzes the transcription of DNA into RNA using the four ribonucleoside triphosphates as substrates. In Mycoplasma mobile (strain ATCC 43663 / 163K / NCTC 11711) (Mesomycoplasma mobile), this protein is DNA-directed RNA polymerase subunit alpha.